We begin with the raw amino-acid sequence, 500 residues long: MANKKIRVRYAPSPTGHLHIGNARTALFNYLFARHNKGTLVLRIEDTDTARNVEGGAESQIENLHWLGIDWDEGPDIGGDYGPYKQSERKDIYQKYIDQLLEEGKAYYSFKTEEELEAQREEQRAMGIAPHYVYEYEGMTTDEIKQAQDEARAKGLKPVVRIHIPEGVTYEWDDIVKGHLSFESDTIGGDFVIQKRDGMPTYNFAVVIDDHLMEISHVLRGDDHISNTPKQLCVYEALGWEAPVFGHMTLIINSATGKKLSKRDESVLQFIEQYRELGFLPEAMFNFITLLGWSPVGESEIFSKREFIKQFDPARLSKSPAAFDQKKLDWVNNQYMKTADRDELLDLALHNLQEAGLVEANPAPGKMEWVRQLVNMYANQMSYTKQIVDLSKIFFTEAKYLTDEEVEEIKKDEARPAIEEFKKQLDKLDNFTAKKIMGAIMATRRETGIKGRKLFMPIRIATTRSMVGPGIGEAMELMGKDTVMKHLDLTLKQLSEAGIE.

A 'HIGH' region motif is present at residues proline 12–asparagine 22. The 'KMSKS' region signature appears at lysine 259–arginine 263. Lysine 262 contributes to the ATP binding site.

This sequence belongs to the class-I aminoacyl-tRNA synthetase family. Glutamate--tRNA ligase type 1 subfamily. In terms of assembly, monomer.

The protein resides in the cytoplasm. The catalysed reaction is tRNA(Glu) + L-glutamate + ATP = L-glutamyl-tRNA(Glu) + AMP + diphosphate. In terms of biological role, catalyzes the attachment of glutamate to tRNA(Glu) in a two-step reaction: glutamate is first activated by ATP to form Glu-AMP and then transferred to the acceptor end of tRNA(Glu). This chain is Glutamate--tRNA ligase, found in Lactobacillus delbrueckii subsp. bulgaricus (strain ATCC 11842 / DSM 20081 / BCRC 10696 / JCM 1002 / NBRC 13953 / NCIMB 11778 / NCTC 12712 / WDCM 00102 / Lb 14).